A 382-amino-acid chain; its full sequence is Sphingoid long-chain base transporter RSB1 (382 aa).

Residues 1 to 34 (MSNATNNTLGSLLPQLEAAANSNSLYGGMVPNLR) are Extracellular-facing. N-linked (GlcNAc...) asparagine glycosylation is found at asparagine 3 and asparagine 6. A helical transmembrane segment spans residues 35–55 (FNITMIVIWGILLTIHVVQLL). At 56–57 (MR) the chain is on the cytoplasmic side. The chain crosses the membrane as a helical span at residues 58-78 (QYWFSIAFICTGILEVLGFIG). Over 79 to 90 (RTWSHSNVADMD) the chain is Extracellular. Residues 91–111 (AFLLNMICLTIAPVFTMGGIY) traverse the membrane as a helical segment. Residues 112 to 135 (YQLAKLIEVYGHRFSLLPSPMAYS) lie on the Cytoplasmic side of the membrane. Residues 136 to 156 (FIFICSDIVSLVVQAVGGGLC) traverse the membrane as a helical segment. Over 157–171 (GVAVTDGTSTTTGNH) the chain is Extracellular. The chain crosses the membrane as a helical span at residues 172–192 (VFIAGLAIQVASMAIFLMLWF). Over 193 to 241 (HFLFRIYISVRWEHINSRPISLSLLKISQTEVDYLYREKFHFLRLEPKR) the chain is Cytoplasmic. A helical transmembrane segment spans residues 242-262 (WVFHYFNLAMTVAVLTIFTRC). Topologically, residues 263 to 281 (CYRLAELVVGWDGYLITHE) are extracellular. Residues 282–302 (WYFIILDALMMAIATVTLTIF) traverse the membrane as a helical segment. The Cytoplasmic segment spans residues 303-382 (HPGFAFKGRS…LFSSKKKAKL (80 aa)).

This sequence belongs to the lipid-translocating exporter (LTE) (TC 9.A.26.1) family.

The protein resides in the cell membrane. Functionally, catalyzes the ATP-dependent translocation of sphingoid long-chain bases (LCBs) from the cytoplasmic site toward the extracytoplasmic side of the membrane (flip-flop). Involved in the establishment of the functional lipid asymmetry of the plasma membrane. Regulates intracellular levels of LCBs, sphingolipid precursors that are growth inhibitory at increased levels. This is Sphingoid long-chain base transporter RSB1 (RSB1) from Saccharomyces cerevisiae (strain AWRI1631) (Baker's yeast).